Here is a 423-residue protein sequence, read N- to C-terminus: L-cysteine:1D-myo-inositol 2-amino-2-deoxy-alpha-D-glucopyranoside ligase (423 aa).

C45 serves as a coordination point for Zn(2+). Residues 45 to 48 (CGIT), T60, and 83 to 85 (NVT) each bind L-cysteinyl-5'-AMP. The 'HIGH' region motif lies at 47-57 (ITPYDATHIGH). The 'ERGGDP' region motif lies at 197–202 (DRGGDP). Residue W238 coordinates L-cysteinyl-5'-AMP. C242 is a Zn(2+) binding site. Position 260–262 (260–262 (GSD)) interacts with L-cysteinyl-5'-AMP. Zn(2+) is bound at residue H267. L-cysteinyl-5'-AMP is bound at residue I294. The 'KMSKS' region motif lies at 300-304 (KMSKS).

This sequence belongs to the class-I aminoacyl-tRNA synthetase family. MshC subfamily. Monomer. Zn(2+) serves as cofactor.

It catalyses the reaction 1D-myo-inositol 2-amino-2-deoxy-alpha-D-glucopyranoside + L-cysteine + ATP = 1D-myo-inositol 2-(L-cysteinylamino)-2-deoxy-alpha-D-glucopyranoside + AMP + diphosphate + H(+). Catalyzes the ATP-dependent condensation of GlcN-Ins and L-cysteine to form L-Cys-GlcN-Ins. In Jonesia denitrificans (strain ATCC 14870 / DSM 20603 / BCRC 15368 / CIP 55.134 / JCM 11481 / NBRC 15587 / NCTC 10816 / Prevot 55134) (Listeria denitrificans), this protein is L-cysteine:1D-myo-inositol 2-amino-2-deoxy-alpha-D-glucopyranoside ligase.